The sequence spans 823 residues: DNA topoisomerase 4 subunit A (823 aa).

The 467-residue stretch at 30 to 496 folds into the Topo IIA-type catalytic domain; sequence LPDIRDGLKP…KAIEIDTASL (467 aa). The O-(5'-phospho-DNA)-tyrosine intermediate role is filled by tyrosine 118.

This sequence belongs to the type II topoisomerase GyrA/ParC subunit family. ParC type 2 subfamily. As to quaternary structure, heterotetramer composed of ParC and ParE.

The protein localises to the cell membrane. The catalysed reaction is ATP-dependent breakage, passage and rejoining of double-stranded DNA.. Inhibited by quinolones, such as levofloxacin. In terms of biological role, topoisomerase IV is essential for chromosome segregation. It relaxes supercoiled DNA. Performs the decatenation events required during the replication of a circular DNA molecule. The chain is DNA topoisomerase 4 subunit A from Streptococcus pneumoniae serotype 4 (strain ATCC BAA-334 / TIGR4).